The chain runs to 271 residues: Cyclase-like protein 3 (271 aa).

The signal sequence occupies residues 1–21 (MYHLLIIITTLSFSSINITFA).

The protein belongs to the Cyclase 1 superfamily.

It localises to the secreted. The protein resides in the extracellular space. Its subcellular location is the extracellular matrix. This Arabidopsis thaliana (Mouse-ear cress) protein is Cyclase-like protein 3.